The primary structure comprises 193 residues: Rho-related GTP-binding protein RhoA-B (193 aa).

Residues 12 to 19 (GDGACGKT), 30 to 37 (FPEVYVPT), 59 to 63 (DTAGQ), 117 to 120 (NKKD), and 160 to 162 (SAK) each bind GTP. (Microbial infection) O-linked (GlcNAc) tyrosine; by Yersinia Afp18 glycosylation is present at Tyr34. Cys190 carries the cysteine methyl ester modification. Residue Cys190 is the site of S-geranylgeranyl cysteine attachment. Residues 191 to 193 (CLL) constitute a propeptide, removed in mature form.

It belongs to the small GTPase superfamily. Rho family. (Microbial infection) Glycosylated at Tyr-34 by Yersinia ruckeri toxin Afp18. Mono-O-GlcNAcylation by Afp18 inhibits RhoA activation by guanine nucleotide exchange factors and blocks RhoA signaling.

It is found in the cell membrane. Regulates a signal transduction pathway linking plasma membrane receptors to the assembly of focal adhesions and actin stress fibers. This is Rho-related GTP-binding protein RhoA-B from Danio rerio (Zebrafish).